The sequence spans 480 residues: Glutamate--tRNA ligase (480 aa).

The 'HIGH' region signature appears at 9–19; that stretch reads PSPTGDPHVGT. The 'KMSKS' region signature appears at 253-257; it reads KISKR. Residue lysine 256 participates in ATP binding.

It belongs to the class-I aminoacyl-tRNA synthetase family. Glutamate--tRNA ligase type 1 subfamily. Monomer.

The protein localises to the cytoplasm. It carries out the reaction tRNA(Glu) + L-glutamate + ATP = L-glutamyl-tRNA(Glu) + AMP + diphosphate. In terms of biological role, catalyzes the attachment of glutamate to tRNA(Glu) in a two-step reaction: glutamate is first activated by ATP to form Glu-AMP and then transferred to the acceptor end of tRNA(Glu). In Deinococcus geothermalis (strain DSM 11300 / CIP 105573 / AG-3a), this protein is Glutamate--tRNA ligase.